Here is a 693-residue protein sequence, read N- to C-terminus: Elongation factor G (693 aa).

The tr-type G domain maps to 8 to 282 (EKTRNIGIMA…AVIDYLPSPL (275 aa)). Residues 17–24 (AHIDAGKT), 81–85 (DTPGH), and 135–138 (NKMD) each bind GTP.

The protein belongs to the TRAFAC class translation factor GTPase superfamily. Classic translation factor GTPase family. EF-G/EF-2 subfamily.

It is found in the cytoplasm. In terms of biological role, catalyzes the GTP-dependent ribosomal translocation step during translation elongation. During this step, the ribosome changes from the pre-translocational (PRE) to the post-translocational (POST) state as the newly formed A-site-bound peptidyl-tRNA and P-site-bound deacylated tRNA move to the P and E sites, respectively. Catalyzes the coordinated movement of the two tRNA molecules, the mRNA and conformational changes in the ribosome. This chain is Elongation factor G, found in Staphylococcus aureus (strain Mu3 / ATCC 700698).